The sequence spans 97 residues: Small ribosomal subunit protein bS20 (97 aa).

A disordered region spans residues 1–22 (MANSKSALKRIRTSERNRLRNK).

It belongs to the bacterial ribosomal protein bS20 family.

Binds directly to 16S ribosomal RNA. The polypeptide is Small ribosomal subunit protein bS20 (Crocosphaera subtropica (strain ATCC 51142 / BH68) (Cyanothece sp. (strain ATCC 51142))).